The sequence spans 111 residues: uncharacterized protein (111 aa).

A helical transmembrane segment spans residues 60 to 80 (TFGRFLAHISCLICILSKRIF).

The protein localises to the mitochondrion membrane. This is an uncharacterized protein from Arabidopsis thaliana (Mouse-ear cress).